We begin with the raw amino-acid sequence, 852 residues long: Elongation factor 2 (852 aa).

The tr-type G domain occupies 17 to 356; the sequence is RNIRNMSVIA…MIAFHLPSPV (340 aa). 26-33 contacts GTP; it reads AHVDHGKS. Phosphothreonine occurs at positions 57 and 59. Residues 170 to 173 and 227 to 229 each bind GTP; these read NKMD and SGL. Histidine 709 bears the Diphthamide mark.

Belongs to the TRAFAC class translation factor GTPase superfamily. Classic translation factor GTPase family. EF-G/EF-2 subfamily. In terms of processing, phosphorylation by EF-2 kinase completely inactivates EF-2. Post-translationally, AMPylated by fic-1.

It localises to the cytoplasm. The enzyme catalyses GTP + H2O = GDP + phosphate + H(+). Catalyzes the GTP-dependent ribosomal translocation step during translation elongation. During this step, the ribosome changes from the pre-translocational (PRE) to the post-translocational (POST) state as the newly formed A-site-bound peptidyl-tRNA and P-site-bound deacylated tRNA move to the P and E sites, respectively. Catalyzes the coordinated movement of the two tRNA molecules, the mRNA and conformational changes in the ribosome. Involved in the morphogenesis of epidermal tissues. This Caenorhabditis elegans protein is Elongation factor 2 (eef-2).